Reading from the N-terminus, the 1374-residue chain is Y' element ATP-dependent helicase YML133C (1374 aa).

The region spanning 375–552 (EIYMADTPSV…LQRIGLTGLA (178 aa)) is the Helicase ATP-binding domain. 388–395 (APPGYGKT) serves as a coordination point for ATP. Residues 609–758 (KLLLALFEIE…EFYGLESKKG (150 aa)) form the Helicase C-terminal domain. Residues 832 to 975 (ANASTNATTN…ATTTESTNAS (144 aa)) show a composition bias toward low complexity. A disordered region spans residues 832 to 999 (ANASTNATTN…RFHPVTDINK (168 aa)). Basic and acidic residues predominate over residues 976-999 (AKEDANKDGNAEDNRFHPVTDINK).

The protein belongs to the helicase family. Yeast subtelomeric Y' repeat subfamily.

In terms of biological role, catalyzes DNA unwinding and is involved in telomerase-independent telomere maintenance. The chain is Y' element ATP-dependent helicase YML133C from Saccharomyces cerevisiae (strain ATCC 204508 / S288c) (Baker's yeast).